Consider the following 226-residue polypeptide: Movement and silencing protein TGBp1 (226 aa).

Residues 1–138 (MDILIISLKS…IASCGFDFET (138 aa)) enclose the (+)RNA virus helicase ATP-binding domain. Positions 139–226 (NSQEEGHLEI…KGLTYVRAGA (88 aa)) constitute a (+)RNA virus helicase C-terminal domain.

It belongs to the Tymovirales TGBp1 protein family. In terms of assembly, homodimer and homooligomer. Interacts with capsid protein. Interacts with host AGO1; this interaction targets the host protein for degradation, thereby suppressing the antiviral RNA silencing.

The protein resides in the host cytoplasm. Functionally, transports viral genome to neighboring plant cells directly through plasmosdesmata, without any budding. The movement protein allows efficient cell to cell propagation, by bypassing the host cell wall barrier. Increases plasmodesma size exclusion limit. Acts as a suppressor of RNA-mediated gene silencing, also known as post-transcriptional gene silencing (PTGS), a mechanism of plant viral defense that limits the accumulation of viral RNAs. This is Movement and silencing protein TGBp1 from Brassica campestris (Field mustard).